The chain runs to 208 residues: Vacuolar ATPase assembly protein VMA12 (208 aa).

Ala2 carries the post-translational modification N-acetylalanine. The next 2 helical transmembrane spans lie at 146 to 166 (LVIT…CTYL) and 179 to 199 (VLAA…VMVR).

Accessory component of the multisubunit proton-transporting vacuolar (V)-ATPase protein pump.

It is found in the cytoplasmic vesicle. It localises to the COPI-coated vesicle membrane. Its subcellular location is the endoplasmic reticulum-Golgi intermediate compartment membrane. The protein resides in the endoplasmic reticulum membrane. Its function is as follows. Accessory component of the proton-transporting vacuolar (V)-ATPase protein pump involved in intracellular iron homeostasis. In aerobic conditions, required for intracellular iron homeostasis, thus triggering the activity of Fe(2+) prolyl hydroxylase (PHD) enzymes, and leading to HIF1A hydroxylation and subsequent proteasomal degradation. Necessary for endolysosomal acidification and lysosomal degradation. May be involved in Golgi homeostasis. Binds 20(S)-hydroxycholesterol (20(S)-OHC). The protein is Vacuolar ATPase assembly protein VMA12 of Homo sapiens (Human).